The primary structure comprises 425 residues: Formyl-CoA:oxalate CoA-transferase (425 aa).

Residues 17–18 (QS), R38, 72–75 (LDTK), 96–98 (NFG), R104, and 136–139 (KVYE) each bind CoA. The active-site Nucleophile is D168. Position 247–249 (247–249 (GGQ)) interacts with substrate.

Belongs to the CoA-transferase III family. Frc subfamily. Homodimer.

It carries out the reaction formyl-CoA + oxalate = oxalyl-CoA + formate. It functions in the pathway metabolic intermediate degradation; oxalate degradation; CO(2) and formate from oxalate: step 1/2. Its function is as follows. Involved in the catabolism of oxalate and in the adapatation to low pH via the induction of the oxalate-dependent acid tolerance response (ATR). Catalyzes the transfer of the CoA moiety from formyl-CoA to oxalate. The chain is Formyl-CoA:oxalate CoA-transferase from Bradyrhizobium diazoefficiens (strain JCM 10833 / BCRC 13528 / IAM 13628 / NBRC 14792 / USDA 110).